We begin with the raw amino-acid sequence, 353 residues long: MALFSAQSPYINPIIPFTGPIQGGLQEGLQVTLQGTTKSFAQRFVVNFQNSFNGNDIAFHFNPRFEEGGYVVCNTKQNGQWGPEERKMQMPFQKGMPFELCFLVQRSEFKVMVNKKFFVQYQHRVPYHLVDTIAVSGCLKLSFITFQNSAAPVQHVFSTLQFSQPVQFPRTPKGRKQKTQNFRPAHQAPMAQTTIHMVHSTPGQMFSTPGIPPVVYPTPAYTIPFYTPIPNGLYPSKSIMISGNVLPDATRFHINLRCGGDIAFHLNPRFNENAVVRNTQINNSWGQEERSLLGRMPFSRGQSFSVWIICEGHCFKVAVNGQHMCEYYHRLKNLQDINTLEVAGDIQLTHVQT.

Positions 17–147 (FTGPIQGGLQ…CLKLSFITFQ (131 aa)) constitute a Galectin 1 domain. Residues asparagine 47, histidine 60, arginine 64, asparagine 74, and 81-87 (WGPEERK) contribute to the a beta-D-galactoside site. Residues 167–186 (QFPRTPKGRKQKTQNFRPAH) form a disordered region. In terms of domain architecture, Galectin 2 spans 225–353 (FYTPIPNGLY…GDIQLTHVQT (129 aa)). Residues histidine 265, arginine 269, threonine 279, and 285-291 (WGQEERS) contribute to the a beta-D-galactoside site.

In terms of assembly, homodimer. In terms of tissue distribution, accentuated expression in liver and thymus of embryo, detected in embryonic heart, brain, lung, liver, and kidney. Highly expressed in adult thymus, small intestine, and liver, and to a lesser extent in lung, kidney, spleen, cardiac, and skeletal muscle. Barely detectable in brain and reticulocyte. Expressed in placenta, uterus and decidua during pregnancy. Expressed in CD4+ T-cells with higher levels in iTreg cells than other T-cell types and sustained high levels throughout iTreg cell differentiation (at protein level). Expressed in myeloid cells in lung. Constitutively expressed in microglia. Isoform 1 is expressed exclusively in the small intestine. Isoform 2 expression in decidua increases in pathological pregnancy from gestation day 7.5 to 13.5 and it is higher than in normal pregnancy. Isoform 3 expression in decidua is higher in normal pregnancy than in pathological pregnancy.

Its subcellular location is the cytoplasm. The protein resides in the nucleus. It localises to the secreted. In terms of biological role, binds galactosides. Has high affinity for the Forssman pentasaccharide. Ligand for HAVCR2/TIM3. Binding to HAVCR2 induces T-helper type 1 lymphocyte (Th1) death. Also stimulates bactericidal activity in infected macrophages by causing macrophage activation and IL1B secretion which restricts intracellular bacterial growth. Ligand for P4HB; the interaction retains P4HB at the cell surface of Th2 T-helper cells, increasing disulfide reductase activity at the plasma membrane, altering the plasma membrane redox state and enhancing cell migration. Ligand for CD44; the interaction enhances binding of SMAD3 to the FOXP3 promoter, leading to up-regulation of FOXP3 expression and increased induced regulatory T (iTreg) cell stability and suppressive function. Promotes ability of mesenchymal stromal cells to suppress T-cell proliferation. Expands regulatory T-cells and induces cytotoxic T-cell apoptosis following virus infection. Activates ERK1/2 phosphorylation inducing cytokine (IL-6, IL-8, IL-12) and chemokine (CCL2) production in mast and dendritic cells. Inhibits degranulation and induces apoptosis of mast cells. Induces maturation and migration of dendritic cells. Inhibits natural killer (NK) cell function. Can transform NK cell phenotype from peripheral to decidual during pregnancy. Astrocyte derived galectin-9 enhances microglial TNF production. May play a role in thymocyte-epithelial interactions relevant to the biology of the thymus. May provide the molecular basis for urate flux across cell membranes, allowing urate that is formed during purine metabolism to efflux from cells and serving as an electrogenic transporter that plays an important role in renal and gastrointestinal urate excretion. Highly selective to the anion urate. Its function is as follows. Acts as an eosinophil chemoattractant. It also inhibits angiogenesis. Suppresses IFNG production by natural killer cells. This chain is Galectin-9 (Lgals9), found in Mus musculus (Mouse).